The following is a 272-amino-acid chain: 3-methyl-2-oxobutanoate hydroxymethyltransferase (272 aa).

2 residues coordinate Mg(2+): Asp-43 and Asp-82. 3-methyl-2-oxobutanoate is bound by residues 43 to 44 (DS), Asp-82, and Lys-112. Glu-114 serves as a coordination point for Mg(2+). Glu-179 functions as the Proton acceptor in the catalytic mechanism.

This sequence belongs to the PanB family. In terms of assembly, homodecamer; pentamer of dimers. Mg(2+) is required as a cofactor.

It localises to the cytoplasm. It catalyses the reaction 3-methyl-2-oxobutanoate + (6R)-5,10-methylene-5,6,7,8-tetrahydrofolate + H2O = 2-dehydropantoate + (6S)-5,6,7,8-tetrahydrofolate. It functions in the pathway cofactor biosynthesis; (R)-pantothenate biosynthesis; (R)-pantoate from 3-methyl-2-oxobutanoate: step 1/2. Functionally, catalyzes the reversible reaction in which hydroxymethyl group from 5,10-methylenetetrahydrofolate is transferred onto alpha-ketoisovalerate to form ketopantoate. The chain is 3-methyl-2-oxobutanoate hydroxymethyltransferase from Staphylococcus aureus (strain JH1).